A 69-amino-acid polypeptide reads, in one-letter code: uncharacterized protein (69 aa).

The HTH cro/C1-type domain maps to 5 to 60 (IREHRKELGLTQEELAERVGVTRQTIIALEKGRYSPSLILAHRIARALGREHIEDI). The H-T-H motif DNA-binding region spans 16–35 (QEELAERVGVTRQTIIALEK).

This is an uncharacterized protein from Methanothermobacter thermautotrophicus (strain ATCC 29096 / DSM 1053 / JCM 10044 / NBRC 100330 / Delta H) (Methanobacterium thermoautotrophicum).